Consider the following 384-residue polypeptide: Probable E3 ubiquitin-protein ligase rnf113 (384 aa).

The span at 1 to 11 (MDLFRKPKKRN) shows a compositional bias: basic residues. Positions 1 to 96 (MDLFRKPKKR…GPSGPRDQGA (96 aa)) are disordered. The span at 42–52 (PMVQSTKQLDA) shows a compositional bias: polar residues. The span at 60-71 (SSDDSDDSDDNQ) shows a compositional bias: acidic residues. The segment at 175–203 (DFAPDICKDYKETGFCTFGDSCKFVHDRS) adopts a C3H1-type zinc-finger fold. An RING-type zinc finger spans residues 241–279 (CFICGNPFVDPIVTKCKHYFCTGCALKSFQKSSKCPICQ). Positions 299 to 384 (KKQQQKQEAE…ESDDDDAEKD (86 aa)) are disordered. Composition is skewed to basic and acidic residues over residues 303-312 (QKQEAEKQEE) and 320-334 (EKPH…HDHE). The segment covering 351 to 384 (EKSDEEQEIMMEDVEGLEGGENDSESDDDDAEKD) has biased composition (acidic residues).

The enzyme catalyses S-ubiquitinyl-[E2 ubiquitin-conjugating enzyme]-L-cysteine + [acceptor protein]-L-lysine = [E2 ubiquitin-conjugating enzyme]-L-cysteine + N(6)-ubiquitinyl-[acceptor protein]-L-lysine.. The protein operates within protein modification; protein ubiquitination. Its function is as follows. May function as E3 ubiquitin-protein ligase that catalyzes the transfer of ubiquitin onto target proteins. May play a role in DNA repair via its role in the synthesis of 'Lys-63'-linked polyubiquitin chains that recruit proteins involved in repair to sites of DNA damage by alkylating agents. This is Probable E3 ubiquitin-protein ligase rnf113 (rnf-113) from Caenorhabditis elegans.